Consider the following 130-residue polypeptide: Gonadotropin subunit beta-1 (130 aa).

The signal sequence occupies residues 1-18; the sequence is MRMHFVVMVMLLPALMMA. Disulfide bonds link cysteine 26–cysteine 74, cysteine 40–cysteine 89, cysteine 51–cysteine 105, cysteine 55–cysteine 107, and cysteine 110–cysteine 117. An N-linked (GlcNAc...) asparagine glycan is attached at asparagine 30.

The protein belongs to the glycoprotein hormones subunit beta family. Heterodimer of an alpha and a beta chain.

Its subcellular location is the secreted. Its function is as follows. Involved in gametogenesis and steroidogenesis. In Cyprinus carpio (Common carp), this protein is Gonadotropin subunit beta-1 (cgba).